The sequence spans 277 residues: Urease accessory protein UreD (277 aa).

This sequence belongs to the UreD family. As to quaternary structure, ureD, UreF and UreG form a complex that acts as a GTP-hydrolysis-dependent molecular chaperone, activating the urease apoprotein by helping to assemble the nickel containing metallocenter of UreC. The UreE protein probably delivers the nickel.

The protein localises to the cytoplasm. In terms of biological role, required for maturation of urease via the functional incorporation of the urease nickel metallocenter. This Sinorhizobium medicae (strain WSM419) (Ensifer medicae) protein is Urease accessory protein UreD.